Reading from the N-terminus, the 173-residue chain is ADP-ribose 1''-phosphate phosphatase (173 aa).

One can recognise a Macro domain in the interval 1–173; sequence MIRYIKGDLL…YDVEFNVYVI (173 aa). Substrate is bound by residues 7–9, 26–28, 33–38, and 145–151; these read GDL, ACN, WGGGIA, and INAGIFA.

This sequence belongs to the POA1 family.

It catalyses the reaction ADP-alpha-D-ribose 1''-phosphate + H2O = ADP-D-ribose + phosphate. Highly specific phosphatase involved in the metabolism of ADP-ribose 1''-phosphate (Appr1p) which is produced as a consequence of tRNA splicing. This is ADP-ribose 1''-phosphate phosphatase (POA1) from Scheffersomyces stipitis (strain ATCC 58785 / CBS 6054 / NBRC 10063 / NRRL Y-11545) (Yeast).